Reading from the N-terminus, the 672-residue chain is Hydrogenase-4 component B (672 aa).

Residues 1–5 lie on the Periplasmic side of the membrane; it reads MDALQ. The chain crosses the membrane as a helical span at residues 6-26; that stretch reads LLTWSLILYLFASLASLFLLG. Over 27–30 the chain is Cytoplasmic; sequence LDRL. A helical membrane pass occupies residues 31–51; it reads AIKLSGITSLVGGVIGIISGI. Topologically, residues 52–79 are periplasmic; it reads TQLHAGVTLVARFAPPFEFADLTLRMDS. Residues 80-100 traverse the membrane as a helical segment; that stretch reads LSAFMVLVISLLVVVCSLYSL. The Cytoplasmic segment spans residues 101–119; that stretch reads TYMREYEGKGAAAMGFFMN. A helical membrane pass occupies residues 120-140; sequence IFIASMVALLVMDNAFWFIVL. Residues 141–164 lie on the Periplasmic side of the membrane; sequence FEMMSLSSWFLVIARQDKTSINAG. Residues 165–185 traverse the membrane as a helical segment; that stretch reads MLYFFIAHAGSVLIMIAFLLM. The Cytoplasmic portion of the chain corresponds to 186–199; sequence GRESGSLDFASFRT. A helical transmembrane segment spans residues 200–220; it reads LSLSPGLASAVFLLAFFGFGA. Topologically, residues 221-242 are periplasmic; it reads KAGMMPLHSWLPRAHPAAPSHA. The helical transmembrane segment at 243–263 threads the bilayer; that stretch reads SALMSGVMVKIGIFGILKVAM. Over 264 to 272 the chain is Cytoplasmic; the sequence is DLLAQTGLP. The helical transmembrane segment at 273–293 threads the bilayer; sequence LWWGILVMAIGAISALLGVLY. Residues 294–311 lie on the Periplasmic side of the membrane; it reads ALAEQDIKRLLAWSTVEN. Residues 312-332 traverse the membrane as a helical segment; that stretch reads VGIILLAVGVAMVGLSLHDPL. The Cytoplasmic segment spans residues 333–342; it reads LTVVGLLGAL. Residues 343-363 traverse the membrane as a helical segment; that stretch reads FHLLNHALFKGLLFLGAGAII. At 364 to 384 the chain is on the periplasmic side; sequence SRLHTHDMEKMGALAKRMPWT. The helical transmembrane segment at 385 to 405 threads the bilayer; that stretch reads AAACLIGCLAISAIPPLNGFI. The Cytoplasmic segment spans residues 406–427; the sequence is SEWYTWQSLFSLSRVEAVALQL. A helical membrane pass occupies residues 428 to 448; the sequence is AGPIAMVMLAVTGGLAVMCFV. Over 449-474 the chain is Periplasmic; the sequence is KMYGITFCGAPRSTHAEEAQEVPNTM. Residues 475–495 traverse the membrane as a helical segment; it reads IVAMLLLAALCVLIALSASWL. Topologically, residues 496–504 are cytoplasmic; that stretch reads APKIMHIAH. A helical transmembrane segment spans residues 505–525; sequence AFTNTPPATVASGIALVPGTF. The Periplasmic portion of the chain corresponds to 526 to 531; that stretch reads HTQVTP. The helical transmembrane segment at 532–552 threads the bilayer; it reads SLLLLLLLAMPLLPGLYWLWC. Over 553 to 651 the chain is Cytoplasmic; that stretch reads RSRRAAFRRT…KEIQHLQSGD (99 aa). Residues 652-672 traverse the membrane as a helical segment; that stretch reads FRLYCLYVVAALVVLLIAIAV.

This sequence belongs to the complex I subunit 5 family.

It localises to the cell inner membrane. Functionally, possible component of hydrogenase 4. In Escherichia coli (strain K12), this protein is Hydrogenase-4 component B.